The sequence spans 58 residues: Small ribosomal subunit protein bS21 (58 aa).

Belongs to the bacterial ribosomal protein bS21 family.

The chain is Small ribosomal subunit protein bS21 from Staphylococcus aureus (strain bovine RF122 / ET3-1).